The sequence spans 560 residues: Oxygen-dependent choline dehydrogenase (560 aa).

Residue 8-37 (DYIIIGAGSAGNVLATRLTEDADVSVLLLE) participates in FAD binding. His-475 serves as the catalytic Proton acceptor.

The protein belongs to the GMC oxidoreductase family. It depends on FAD as a cofactor.

It carries out the reaction choline + A = betaine aldehyde + AH2. It catalyses the reaction betaine aldehyde + NAD(+) + H2O = glycine betaine + NADH + 2 H(+). The protein operates within amine and polyamine biosynthesis; betaine biosynthesis via choline pathway; betaine aldehyde from choline (cytochrome c reductase route): step 1/1. Involved in the biosynthesis of the osmoprotectant glycine betaine. Catalyzes the oxidation of choline to betaine aldehyde and betaine aldehyde to glycine betaine at the same rate. This chain is Oxygen-dependent choline dehydrogenase, found in Stenotrophomonas maltophilia (strain K279a).